Here is a 348-residue protein sequence, read N- to C-terminus: Putative S-adenosyl-L-methionine-dependent methyltransferase MRA_3439 (348 aa).

Residues D171 and 200–201 (DL) each bind S-adenosyl-L-methionine.

The protein belongs to the UPF0677 family.

Its function is as follows. Exhibits S-adenosyl-L-methionine-dependent methyltransferase activity. The protein is Putative S-adenosyl-L-methionine-dependent methyltransferase MRA_3439 of Mycobacterium tuberculosis (strain ATCC 25177 / H37Ra).